The following is a 448-amino-acid chain: MSASAVNVNPGRNVVVVGTQWGDEGKGKIVDWLTDHAQGVVRFQGGHNAGHTLIIGGKKTILRLIPSGIMHPGVACYIGNGVVLSPEALFKEIGELEAAGVDVQNRLFISEATTLILPYHIAIDQGREARRGAGKIGTTGRGIGPAYEDKVARRGLRVQDLFEPEIFAERLRENLDYHNFVLTQYLGVAAVDFQQTLDTMLSYADRLRPMVTDVSRRLYDVNAAGSNLLFEGAQGTLLDIDHGTYPFVTSSNCVAGAATAGAGVGPQKLNYILGITKAYCTRVGSGPFPSELYDADNAARQEAIGLELATVGKEFGSVTGRPRRTGWLDAAALRRSIQINGVSGLCMTKLDVLDGLDEVKLCVGYKVDGKNVDLLPRGASEVARCEPVYETFAGWKESTVGIKEWDKLPANARAYLSRVQEVAGIPIDMVSTGPDRDETILLRHPFKV.

Residues 22-28 (GDEGKGK) and 50-52 (GHT) each bind GTP. Asp23 functions as the Proton acceptor in the catalytic mechanism. Positions 23 and 50 each coordinate Mg(2+). Residues 23-26 (DEGK), 48-51 (NAGH), Thr139, Arg153, Gln234, Thr249, and Arg321 each bind IMP. The active-site Proton donor is the His51. 317–323 (SVTGRPR) contacts substrate. GTP is bound by residues Arg323, 349–351 (KLD), and 431–433 (STG).

The protein belongs to the adenylosuccinate synthetase family. Homodimer. Mg(2+) is required as a cofactor.

The protein resides in the cytoplasm. The catalysed reaction is IMP + L-aspartate + GTP = N(6)-(1,2-dicarboxyethyl)-AMP + GDP + phosphate + 2 H(+). It functions in the pathway purine metabolism; AMP biosynthesis via de novo pathway; AMP from IMP: step 1/2. In terms of biological role, plays an important role in the de novo pathway of purine nucleotide biosynthesis. Catalyzes the first committed step in the biosynthesis of AMP from IMP. This is Adenylosuccinate synthetase from Paraburkholderia xenovorans (strain LB400).